The chain runs to 320 residues: Malate dehydrogenase (320 aa).

NAD(+) is bound by residues 10 to 15 (GSGMIG) and aspartate 34. Substrate contacts are provided by arginine 83 and arginine 89. NAD(+)-binding positions include asparagine 96 and 119–121 (ITN). 2 residues coordinate substrate: asparagine 121 and arginine 152. Histidine 176 acts as the Proton acceptor in catalysis.

This sequence belongs to the LDH/MDH superfamily. MDH type 3 family.

It carries out the reaction (S)-malate + NAD(+) = oxaloacetate + NADH + H(+). Functionally, catalyzes the reversible oxidation of malate to oxaloacetate. In Bartonella quintana (strain Toulouse) (Rochalimaea quintana), this protein is Malate dehydrogenase.